Consider the following 211-residue polypeptide: Probable nicotinate-nucleotide adenylyltransferase (211 aa).

The protein belongs to the NadD family.

It carries out the reaction nicotinate beta-D-ribonucleotide + ATP + H(+) = deamido-NAD(+) + diphosphate. Its pathway is cofactor biosynthesis; NAD(+) biosynthesis; deamido-NAD(+) from nicotinate D-ribonucleotide: step 1/1. Its function is as follows. Catalyzes the reversible adenylation of nicotinate mononucleotide (NaMN) to nicotinic acid adenine dinucleotide (NaAD). This chain is Probable nicotinate-nucleotide adenylyltransferase, found in Desulfotalea psychrophila (strain LSv54 / DSM 12343).